A 319-amino-acid polypeptide reads, in one-letter code: Acetyl esterase (319 aa).

The Involved in the stabilization of the negatively charged intermediate by the formation of the oxyanion hole signature appears at 91-93 (HGG). Residues Ser165, Asp262, and His292 contribute to the active site.

Belongs to the 'GDXG' lipolytic enzyme family. In terms of assembly, homodimer. Interacts with MalT and MelA.

Its subcellular location is the cytoplasm. In terms of biological role, displays esterase activity towards short chain fatty esters (acyl chain length of up to 8 carbons). Able to hydrolyze triacetylglycerol (triacetin) and tributyrylglycerol (tributyrin), but not trioleylglycerol (triolein) or cholesterol oleate. Negatively regulates MalT activity by antagonizing maltotriose binding. Inhibits MelA galactosidase activity. The chain is Acetyl esterase from Escherichia coli O127:H6 (strain E2348/69 / EPEC).